A 189-amino-acid polypeptide reads, in one-letter code: Apolipoprotein D (189 aa).

An N-terminal signal peptide occupies residues 1-20 (MVTMLMFLATLAGLFTTAKG). The residue at position 21 (Q21) is a Pyrrolidone carboxylic acid. Intrachain disulfides connect C28–C134 and C61–C185. Residues N65 and N98 are each glycosylated (N-linked (GlcNAc...) asparagine).

This sequence belongs to the calycin superfamily. Lipocalin family. As to quaternary structure, homodimer. In terms of tissue distribution, highest levels of expression in brain, testis, virgin mammary gland and salivary gland. Moderate levels in skeletal muscle, lactating mammary gland and thymus. Low levels in lung and lymph node. No expression in kidney, pancreas, liver or spleen.

It localises to the secreted. In terms of biological role, APOD occurs in the macromolecular complex with lecithin-transport and binding of bilin. Appears to be able to transport a variety of ligands in a number of different contexts. The polypeptide is Apolipoprotein D (Apod) (Mus musculus (Mouse)).